The following is a 262-amino-acid chain: Translation initiation factor 2 subunit alpha (262 aa).

The S1 motif domain occupies 15–86 (GELVVGTVHK…RKGHVDVSMK (72 aa)).

The protein belongs to the eIF-2-alpha family. As to quaternary structure, heterotrimer composed of an alpha, a beta and a gamma chain.

Functionally, eIF-2 functions in the early steps of protein synthesis by forming a ternary complex with GTP and initiator tRNA. The chain is Translation initiation factor 2 subunit alpha (eif2a) from Methanothermobacter thermautotrophicus (strain ATCC 29096 / DSM 1053 / JCM 10044 / NBRC 100330 / Delta H) (Methanobacterium thermoautotrophicum).